Consider the following 366-residue polypeptide: UDP-N-acetylglucosamine--N-acetylmuramyl-(pentapeptide) pyrophosphoryl-undecaprenol N-acetylglucosamine transferase (366 aa).

Residues 22-24 (TGG), Asn134, Arg170, Ser198, Ile253, and Gln298 contribute to the UDP-N-acetyl-alpha-D-glucosamine site.

The protein belongs to the glycosyltransferase 28 family. MurG subfamily.

It is found in the cell inner membrane. The catalysed reaction is di-trans,octa-cis-undecaprenyl diphospho-N-acetyl-alpha-D-muramoyl-L-alanyl-D-glutamyl-meso-2,6-diaminopimeloyl-D-alanyl-D-alanine + UDP-N-acetyl-alpha-D-glucosamine = di-trans,octa-cis-undecaprenyl diphospho-[N-acetyl-alpha-D-glucosaminyl-(1-&gt;4)]-N-acetyl-alpha-D-muramoyl-L-alanyl-D-glutamyl-meso-2,6-diaminopimeloyl-D-alanyl-D-alanine + UDP + H(+). It participates in cell wall biogenesis; peptidoglycan biosynthesis. Cell wall formation. Catalyzes the transfer of a GlcNAc subunit on undecaprenyl-pyrophosphoryl-MurNAc-pentapeptide (lipid intermediate I) to form undecaprenyl-pyrophosphoryl-MurNAc-(pentapeptide)GlcNAc (lipid intermediate II). This Xylella fastidiosa (strain M12) protein is UDP-N-acetylglucosamine--N-acetylmuramyl-(pentapeptide) pyrophosphoryl-undecaprenol N-acetylglucosamine transferase.